The primary structure comprises 303 residues: N-acetyl-D-glucosamine kinase (303 aa).

ATP is bound by residues 4-11 (GFDIGGTK) and 133-140 (GVGGGLVL). 4 residues coordinate Zn(2+): histidine 157, cysteine 177, cysteine 179, and cysteine 184.

It belongs to the ROK (NagC/XylR) family. NagK subfamily.

It catalyses the reaction N-acetyl-D-glucosamine + ATP = N-acetyl-D-glucosamine 6-phosphate + ADP + H(+). The protein operates within cell wall biogenesis; peptidoglycan recycling. In terms of biological role, catalyzes the phosphorylation of N-acetyl-D-glucosamine (GlcNAc) derived from cell-wall degradation, yielding GlcNAc-6-P. In Salmonella heidelberg (strain SL476), this protein is N-acetyl-D-glucosamine kinase.